We begin with the raw amino-acid sequence, 71 residues long: Large ribosomal subunit protein bL31 (71 aa).

The Zn(2+) site is built by C16, C18, C37, and C40.

This sequence belongs to the bacterial ribosomal protein bL31 family. Type A subfamily. As to quaternary structure, part of the 50S ribosomal subunit. Zn(2+) is required as a cofactor.

Functionally, binds the 23S rRNA. This Solidesulfovibrio magneticus (strain ATCC 700980 / DSM 13731 / RS-1) (Desulfovibrio magneticus) protein is Large ribosomal subunit protein bL31.